A 101-amino-acid chain; its full sequence is Movement protein (101 aa).

A helical transmembrane segment spans residues 30 to 50 (EVAILSFVALICFYLLYLWVL). Residues 75–101 (VDRSNPIPNLPAPPSQGNPGPFVPGTG) form a disordered region.

The protein belongs to the mastrevirus movement protein family. In terms of assembly, interacts with the capsid protein (CP). Part of a MP-CP-viral DNA complex.

It localises to the host membrane. Functionally, involved in the viral transport within, and between cells. This Maize streak virus genotype A (isolate South Africa) (MSV) protein is Movement protein.